The chain runs to 87 residues: Guanine nucleotide-binding protein subunit gamma (87 aa).

Cysteine methyl ester is present on Cys-84. Cys-84 carries the S-geranylgeranyl cysteine lipid modification. Residues 85–87 (LLV) constitute a propeptide, removed in mature form.

This sequence belongs to the G protein gamma family. In terms of assembly, g proteins are composed of 3 units, alpha, beta and gamma. In terms of processing, the N-terminus is blocked.

The protein localises to the cell membrane. Functionally, guanine nucleotide-binding proteins (G proteins) are involved as a modulator or transducer in various transmembrane signaling systems. This major G-protein of the squid photoreceptor is involved in visual transduction. The beta and gamma chains are required for the GTPase activity, for replacement of GDP by GTP, and for G protein-effector interaction. This chain is Guanine nucleotide-binding protein subunit gamma, found in Loligo forbesii (Veined squid).